The sequence spans 216 residues: MSDRQIKGILGTKLGMTQVFDDQNRVVPVTVVQAGPNVVTQIRTPEKDGYSAVQLAFGAIDPRKVNKPRTGHFTKAGVTPRRHVVELRTADAGEYEVGQEVTAEVFEAGTVVDVVGTSKGKGFAGTMKRHGFRGQGASHGTQAVHRKPGSIGGCATPGRVFKGMRMSGRMGSDRVTTQNLKVHRVEGESGLLLIKGAIPGPKGGLVLVKSPAKGGA.

Positions 132 to 157 are disordered; it reads FRGQGASHGTQAVHRKPGSIGGCATP.

Belongs to the universal ribosomal protein uL3 family. As to quaternary structure, part of the 50S ribosomal subunit. Forms a cluster with proteins L14 and L19.

In terms of biological role, one of the primary rRNA binding proteins, it binds directly near the 3'-end of the 23S rRNA, where it nucleates assembly of the 50S subunit. The protein is Large ribosomal subunit protein uL3 of Saccharopolyspora erythraea (strain ATCC 11635 / DSM 40517 / JCM 4748 / NBRC 13426 / NCIMB 8594 / NRRL 2338).